Reading from the N-terminus, the 396-residue chain is E3 ubiquitin-protein transferase MAEA (396 aa).

Residues 1 to 124 (MAVQESAAQL…AAASVWKRKR (124 aa)) form an extracellular and involved in cell to cell contact region. T28 is modified (phosphothreonine). The 33-residue stretch at 121–153 (KRKRMDRMMVEHLLRCGYYNTAVKLARQSGIED) folds into the LisH domain. The region spanning 159-216 (MFLTAKEVEESLERRETATCLAWCHDNKSRLRKMKSCLEFSLRIQEFIELIRQNKRLD) is the CTLH domain. Residues 314 to 381 (CPVCSRSLNK…QDDKVVCPRT (68 aa)) form an RING-Gid-type zinc finger.

As to quaternary structure, identified in the CTLH complex that contains GID4, RANBP9 and/or RANBP10, MKLN1, MAEA, RMND5A (or alternatively its paralog RMND5B), GID8, ARMC8, WDR26 and YPEL5. Within this complex, MAEA, RMND5A (or alternatively its paralog RMND5B), GID8, WDR26, and RANBP9 and/or RANBP10 form the catalytic core, while GID4, MKLN1, ARMC8 and YPEL5 have ancillary roles. Interacts with F-actin. In terms of processing, autoubiquitinated as component of the CTLH E3 ubiquitin-protein ligase complex (in vitro).

Its subcellular location is the cytoplasm. It localises to the nucleus. The protein resides in the nucleoplasm. The protein localises to the nucleus matrix. It is found in the cell membrane. Its subcellular location is the cytoskeleton. The catalysed reaction is S-ubiquitinyl-[E2 ubiquitin-conjugating enzyme]-L-cysteine + [acceptor protein]-L-lysine = [E2 ubiquitin-conjugating enzyme]-L-cysteine + N(6)-ubiquitinyl-[acceptor protein]-L-lysine.. In terms of biological role, core component of the CTLH E3 ubiquitin-protein ligase complex that selectively accepts ubiquitin from UBE2H and mediates ubiquitination and subsequent proteasomal degradation of the transcription factor HBP1. MAEA and RMND5A are both required for catalytic activity of the CTLH E3 ubiquitin-protein ligase complex. MAEA is required for normal cell proliferation. The CTLH E3 ubiquitin-protein ligase complex is not required for the degradation of enzymes involved in gluconeogenesis, such as FBP1. Plays a role in erythroblast enucleation during erythrocyte maturation and in the development of mature macrophages. Mediates the attachment of erythroid cell to mature macrophages; this MAEA-mediated contact inhibits erythroid cell apoptosis. Participates in erythroblastic island formation, which is the functional unit of definitive erythropoiesis. Associates with F-actin to regulate actin distribution in erythroblasts and macrophages. May contribute to nuclear architecture and cells division events. The polypeptide is E3 ubiquitin-protein transferase MAEA (MAEA) (Pongo abelii (Sumatran orangutan)).